A 147-amino-acid polypeptide reads, in one-letter code: Mucoricin (147 aa).

Residues 4–143 (EEGRLFFIKS…VSANQRWELV (140 aa)) form the Ricin B-type lectin domain.

This sequence belongs to the ribosome-inactivating protein family. Type 1 RIP subfamily.

It is found in the secreted. The enzyme catalyses Endohydrolysis of the N-glycosidic bond at one specific adenosine on the 28S rRNA.. In terms of biological role, N-glycosylase that inhibits protein synthesis in the host by depurinating ribosomal rRNA, and thus acts as a ribosomal inactivating protein (RIP). Promotes vascular permeability in the host and induces necrosis and apoptosis of host alveolar epithelial cells. This Rhizopus delemar (strain RA 99-880 / ATCC MYA-4621 / FGSC 9543 / NRRL 43880) (Mucormycosis agent) protein is Mucoricin.